Here is a 328-residue protein sequence, read N- to C-terminus: Probable G-protein coupled receptor 82 (328 aa).

Over 1 to 11 the chain is Extracellular; it reads MTNNSTCIQPS. 2 N-linked (GlcNAc...) asparagine glycosylation sites follow: asparagine 3 and asparagine 4. A helical membrane pass occupies residues 12–32; the sequence is VISTTALPVTYIFLFIIGLFG. At 33 to 55 the chain is on the cytoplasmic side; that stretch reads NSLAQWVFLTKIGKKTSTHIYLA. The chain crosses the membrane as a helical span at residues 56-76; the sequence is NLVTANLLVCTAMPFMGIYFL. Residues 77–92 lie on the Extracellular side of the membrane; it reads RGFYWKYQSVQCRLVN. A helical transmembrane segment spans residues 93 to 115; it reads FLGTLSMHVSMFVSLLILSWIAI. Topologically, residues 116-156 are cytoplasmic; the sequence is SRYATLMKKESKQEATSCYERMFYGHVLKRFRQPNFARTMC. The chain crosses the membrane as a helical span at residues 157-177; sequence IYIWGVVLVIIIPVTLYYSVV. Over 178–197 the chain is Extracellular; it reads EATEEGQSQCYNRQMELGAR. Residues 198 to 218 traverse the membrane as a helical segment; it reads PSQIAGLIGTTFIGFSFLVVV. Topologically, residues 219–251 are cytoplasmic; it reads TSYYSLVSHLRRVRTCTSITEKDLTYRSVKRHL. The chain crosses the membrane as a helical span at residues 252–272; that stretch reads LIIQVLLVVCFLPYSIFKPIF. The Extracellular portion of the chain corresponds to 273-328; it reads YVLHQREGDCQQLNYLIEAKNILTCLASARSSTDPIIFLLLDKTFKKTLYGLLTKS.

The protein belongs to the G-protein coupled receptor 1 family.

It is found in the cell membrane. Its function is as follows. Orphan receptor. This is Probable G-protein coupled receptor 82 (Gpr82) from Mus musculus (Mouse).